Reading from the N-terminus, the 368-residue chain is Agmatine deiminase (368 aa).

The active-site Amidino-cysteine intermediate is Cys357.

This sequence belongs to the agmatine deiminase family. In terms of assembly, homodimer.

The catalysed reaction is agmatine + H2O = N-carbamoylputrescine + NH4(+). The protein operates within amine and polyamine biosynthesis; putrescine biosynthesis via agmatine pathway; N-carbamoylputrescine from agmatine: step 1/1. Mediates the hydrolysis of agmatine into N-carbamoylputrescine in the arginine decarboxylase (ADC) pathway of putrescine biosynthesis, a basic polyamine. The sequence is that of Agmatine deiminase from Ectopseudomonas mendocina (strain ymp) (Pseudomonas mendocina).